The primary structure comprises 256 residues: Small ribosomal subunit protein eS1 (256 aa).

A compositionally biased stretch (basic residues) spans 1–18; that stretch reads MAVGKNKRLSKGKKGLKK. Positions 1 to 20 are disordered; the sequence is MAVGKNKRLSKGKKGLKKKA. An N-acetylalanine; partial modification is found at alanine 2.

This sequence belongs to the eukaryotic ribosomal protein eS1 family. In terms of assembly, component of the small ribosomal subunit. Mature ribosomes consist of a small (40S) and a large (60S) subunit. The 40S subunit contains about 33 different proteins and 1 molecule of RNA (18S). The 60S subunit contains about 49 different proteins and 3 molecules of RNA (25S, 5.8S and 5S).

The protein localises to the cytoplasm. The sequence is that of Small ribosomal subunit protein eS1 from Chaetomium globosum (strain ATCC 6205 / CBS 148.51 / DSM 1962 / NBRC 6347 / NRRL 1970) (Soil fungus).